The chain runs to 250 residues: Complement factor B-like protease (250 aa).

3 consecutive Sushi domains span residues 3-73, 74-133, and 136-193; these read TRCD…KCRA, VWCP…VCDD, and GDCP…QCRA. 6 disulfides stabilise this stretch: Cys-5/Cys-44, Cys-30/Cys-71, Cys-76/Cys-118, Cys-104/Cys-131, Cys-138/Cys-178, and Cys-164/Cys-191. N-linked (GlcNAc...) asparagine glycosylation occurs at Asn-115. N-linked (GlcNAc...) asparagine glycosylation is present at Asn-221.

It belongs to the peptidase S1 family. Plasma.

The protein localises to the secreted. Functionally, required in both the classical and alternate pathways of the complement system. The protein is Complement factor B-like protease of Gallus gallus (Chicken).